Reading from the N-terminus, the 126-residue chain is Aspartate 1-decarboxylase (126 aa).

The active-site Schiff-base intermediate with substrate; via pyruvic acid is Ser-25. Ser-25 carries the post-translational modification Pyruvic acid (Ser). A substrate-binding site is contributed by Thr-57. Tyr-58 serves as the catalytic Proton donor. Residue 73 to 75 coordinates substrate; that stretch reads GAA.

Belongs to the PanD family. In terms of assembly, heterooctamer of four alpha and four beta subunits. Pyruvate serves as cofactor. Post-translationally, is synthesized initially as an inactive proenzyme, which is activated by self-cleavage at a specific serine bond to produce a beta-subunit with a hydroxyl group at its C-terminus and an alpha-subunit with a pyruvoyl group at its N-terminus.

The protein resides in the cytoplasm. It catalyses the reaction L-aspartate + H(+) = beta-alanine + CO2. The protein operates within cofactor biosynthesis; (R)-pantothenate biosynthesis; beta-alanine from L-aspartate: step 1/1. In terms of biological role, catalyzes the pyruvoyl-dependent decarboxylation of aspartate to produce beta-alanine. In Cronobacter sakazakii (strain ATCC BAA-894) (Enterobacter sakazakii), this protein is Aspartate 1-decarboxylase.